Consider the following 245-residue polypeptide: 6-carboxyhexanoate--CoA ligase (245 aa).

The protein belongs to the BioW family. Homodimer. Requires Mg(2+) as cofactor.

It catalyses the reaction heptanedioate + ATP + CoA = 6-carboxyhexanoyl-CoA + AMP + diphosphate. It participates in metabolic intermediate metabolism; pimeloyl-CoA biosynthesis; pimeloyl-CoA from pimelate: step 1/1. In terms of biological role, catalyzes the transformation of pimelate into pimeloyl-CoA with concomitant hydrolysis of ATP to AMP. The polypeptide is 6-carboxyhexanoate--CoA ligase (Thermodesulfovibrio yellowstonii (strain ATCC 51303 / DSM 11347 / YP87)).